A 208-amino-acid chain; its full sequence is MKRPIFIGITGGTGSGKSTIAKEIYRQFGEECIAMIEQDSYYKDQSHLSMDDRVKTNYDHPNAFDNNLLVSHLESLLNGHCIQKPSYDFSIHNRIEDTTKVEPKEIVIVEGILILEDPRIRELLDIKIYVDTDADVRIIRRMVRDINERGRTIESVINQYLNVVKPMHNQFTEPTKKFADIIIPEGGHNKVAIDIIVAKIKEVLGKYE.

Position 11–18 (11–18 (GGTGSGKS)) interacts with ATP.

It belongs to the uridine kinase family.

The protein localises to the cytoplasm. It catalyses the reaction uridine + ATP = UMP + ADP + H(+). The enzyme catalyses cytidine + ATP = CMP + ADP + H(+). The protein operates within pyrimidine metabolism; CTP biosynthesis via salvage pathway; CTP from cytidine: step 1/3. Its pathway is pyrimidine metabolism; UMP biosynthesis via salvage pathway; UMP from uridine: step 1/1. The sequence is that of Uridine kinase from Clostridium perfringens (strain SM101 / Type A).